The primary structure comprises 475 residues: Peroxisome proliferator-activated receptor gamma (475 aa).

A glycan (O-linked (GlcNAc) threonine) is linked at threonine 54. Serine 82 is subject to Phosphoserine; by MAPK. The nuclear receptor DNA-binding region spans 106-180 (AIECRVCGDK…VGMSHNAIRF (75 aa)). NR C4-type zinc fingers lie at residues 109–129 (CRVC…CEGC) and 146–168 (CDLN…FQKC). The tract at residues 175-250 (HNAIRFGRMP…DKSPFVIYDM (76 aa)) is interaction with FAM120B. Residues 208–473 (DLRALAKHLY…HPLLQEIYKD (266 aa)) enclose the NR LBD domain. Lysine 222 is covalently cross-linked (Glycyl lysine isopeptide (Lys-Gly) (interchain with G-Cter in ubiquitin)). The short motif at 465-473 (PLLQEIYKD) is the 9aaTAD element.

The protein belongs to the nuclear hormone receptor family. NR1 subfamily. As to quaternary structure, interacts with FOXO1 (acetylated form). Heterodimer with other nuclear receptors, such as RXRA. The heterodimer with the retinoic acid receptor RXRA is called adipocyte-specific transcription factor ARF6. Interacts with NCOA6 coactivator, leading to a strong increase in transcription of target genes. Interacts with coactivator PPARBP, leading to a mild increase in transcription of target genes. Interacts with NOCA7 in a ligand-inducible manner. Interacts with NCOA1 and NCOA2 LXXLL motifs. Interacts with ASXL1, ASXL2, DNTTIP2, FAM120B, MAP2K1/MEK1, NR0B2, PDPK1, PRDM16, PRMT2 and TGFB1I1. Interacts (when activated by agonist) with PPP5C. Interacts with HELZ2 and THRAP3; the interaction stimulates the transcriptional activity of PPARG. Interacts with PER2, the interaction is ligand dependent and blocks PPARG recruitment to target promoters. Interacts with NOCT. Interacts with ACTN4. Interacts (when in the liganded conformation) with GPS2. Interacts with CRY1 and CRY2 in a ligand-dependent manner. In the absence of hormonal ligand, interacts with TACC1. In macrophages, interacts with PAQR3 and STUB1; the interactions promote PPARG poylubiquitination and STUB1-mediated degradation. In terms of processing, O-GlcNAcylation at Thr-54 reduces transcriptional activity in adipocytes. Post-translationally, phosphorylated at basal conditions and dephosphorylated when treated with the ligand. May be dephosphorylated by PPP5C. The phosphorylated form may be inactive and dephosphorylation induces adipogenic activity. Ubiquitinated by E3 ubiquitin-protein ligase complex containing FBXO9; leading to proteasomal degradation. Ubiquitinated at Lys-222 by TRIM55 leading to proteasomal degradation. Ubiquitinated by E3 ubiquitin-protein ligase STUB1/CHIP; leading to proteasomal degradation.

The protein resides in the nucleus. The protein localises to the cytoplasm. With respect to regulation, PDPK1 activates its transcriptional activity independently of its kinase activity. Interacts with HELZ2 and THRAP3; the interaction enhances the transcriptional activity of PPARG. Functionally, nuclear receptor that binds peroxisome proliferators such as hypolipidemic drugs and fatty acids. Once activated by a ligand, the nuclear receptor binds to DNA specific PPAR response elements (PPRE) and modulates the transcription of its target genes, such as acyl-CoA oxidase. It therefore controls the peroxisomal beta-oxidation pathway of fatty acids. Key regulator of adipocyte differentiation and glucose homeostasis. ARF6 acts as a key regulator of the tissue-specific adipocyte P2 (aP2) enhancer. Acts as a critical regulator of gut homeostasis by suppressing NF-kappa-B-mediated pro-inflammatory responses. Plays a role in the regulation of cardiovascular circadian rhythms by regulating the transcription of BMAL1 in the blood vessels. This Cricetulus griseus (Chinese hamster) protein is Peroxisome proliferator-activated receptor gamma (PPARG).